Here is a 179-residue protein sequence, read N- to C-terminus: Translation initiation factor IF-3 (179 aa).

Belongs to the IF-3 family. In terms of assembly, monomer.

Its subcellular location is the cytoplasm. Its function is as follows. IF-3 binds to the 30S ribosomal subunit and shifts the equilibrium between 70S ribosomes and their 50S and 30S subunits in favor of the free subunits, thus enhancing the availability of 30S subunits on which protein synthesis initiation begins. In Buchnera aphidicola subsp. Acyrthosiphon pisum (strain 5A), this protein is Translation initiation factor IF-3.